The following is a 224-amino-acid chain: Oxygen-evolving enhancer protein 3-1, chloroplastic (224 aa).

Residues 1-44 (MASMGGLHGASPAVLEGSLKINGSSRLNGSGRVAVAQRSRLVVR) constitute a chloroplast transit peptide. The N-terminal 31 residues, 45–75 (AQQSEETSRRSVIGLVAAGLAGGSFVQAVLA), are a transit peptide targeting the thylakoid. At Thr-189 the chain carries Phosphothreonine. A Phosphotyrosine modification is found at Tyr-209. Thr-212 carries the post-translational modification Phosphothreonine.

This sequence belongs to the PsbQ family. As to expression, expressed in green tissue, with high steady-state mRNA levels in leaves. Not expressed in roots.

It is found in the plastid. Its subcellular location is the chloroplast thylakoid membrane. Functionally, required for photosystem II assembly/stability and photoautotrophic growth under low light conditions. The polypeptide is Oxygen-evolving enhancer protein 3-1, chloroplastic (PSBQ1) (Arabidopsis thaliana (Mouse-ear cress)).